Consider the following 155-residue polypeptide: UPF0266 membrane protein LMHCC_1856 (155 aa).

Helical transmembrane passes span 8 to 28 (IFLF…DAVI), 46 to 66 (RWDG…NTFF), and 70 to 90 (PFST…ICFF).

It belongs to the UPF0266 family.

It localises to the cell membrane. In Listeria monocytogenes serotype 4a (strain HCC23), this protein is UPF0266 membrane protein LMHCC_1856.